We begin with the raw amino-acid sequence, 473 residues long: O-methyltransferase aclU (473 aa).

S-adenosyl-L-methionine is bound by residues Asp-320 and 354–356 (GDF). Catalysis depends on His-373, which acts as the Proton acceptor.

Belongs to the class I-like SAM-binding methyltransferase superfamily. Cation-independent O-methyltransferase family. COMT subfamily.

Its pathway is mycotoxin biosynthesis. Functionally, O-methyltransferase; part of the gene cluster that mediates the biosynthesis of aspirochlorine (or antibiotic A30641), an unusual halogenated spiro compound with distinctive antifungal properties due to selective inhibition of protein biosynthesis, and which is also active against bacteria, viruses, and murine tumor cells. The non-ribosomal peptide synthetase (NRPS) aclP is responsible the formation of the diketopiperazine (DKP) core from the condensation of 2 phenylalanine residues. One Phe residue is tailored into chlorotyrosine by hydroxylation and chlorination, whereas the second Phe undergoes an unprecedented C-C bond cleavage to be converted into glycine. After formation of the DKP, sulfur is incorporated into the DKP by conjugation with glutathione by aclG, followed by its stepwise degradation to the thiol by aclI, aclJ and aclK, and the dithiol oxidation by aclT. In addition, oxygenases (aclB, aclC, aclL and aclO) and O-methyltransferases (aclM and aclU) act as tailoring enzymes to produce the intermediate dechloroaspirochlorine. Ultimately, chlorination of dechloroaspirochlorine by the halogenase aclH is the last step in the aspirochlorine pathway. The protein is O-methyltransferase aclU of Aspergillus oryzae (strain ATCC 42149 / RIB 40) (Yellow koji mold).